The chain runs to 226 residues: Glutathione S-transferase-like protein gedE (226 aa).

The 82-residue stretch at 4–85 (LLPIKVWGQG…YLVERYDTAH (82 aa)) folds into the GST N-terminal domain. The 135-residue stretch at 92 to 226 (DTNDAQHARQ…VLSAVMPPPS (135 aa)) folds into the GST C-terminal domain.

Belongs to the GST superfamily.

The protein operates within secondary metabolite biosynthesis. In terms of biological role, glutathione S-transferase-like protein; part of the gene cluster that mediates the biosynthesis of geodin, an intermediate in the biosynthesis of other natural products. The pathway begins with the synthesis of atrochrysone thioester by the polyketide synthase (PKS) gedC. The atrochrysone carboxyl ACP thioesterase gedB then breaks the thioester bond and releases the atrochrysone carboxylic acid from gedC. The atrochrysone carboxylic acid is then converted to atrochrysone which is further transformed into emodinanthrone. The next step is performed by the emodinanthrone oxygenase gedH that catalyzes the oxidation of emodinanthrone to emodin. Emodin O-methyltransferase encoded probably by gedA then catalyzes methylation of the 8-hydroxy group of emodin to form questin. Ring cleavage of questin by questin oxidase gedK leads to desmethylsulochrin via several intermediates including questin epoxide. Another methylation step probably catalyzed by methyltransferase gedG leads to the formation of sulochrin which is further converted to dihydrogeodin by the sulochrin halogenase gedL. Finally, the dihydrogeodin oxidase gedJ catalyzes the stereospecific phenol oxidative coupling reaction converting dihydrogeodin to geodin. In Aspergillus terreus (strain NIH 2624 / FGSC A1156), this protein is Glutathione S-transferase-like protein gedE.